A 191-amino-acid polypeptide reads, in one-letter code: Protein LIGHT-DEPENDENT SHORT HYPOCOTYLS 9 (191 aa).

The span at 1 to 14 shows a compositional bias: basic and acidic residues; sequence MSSDRHTPTKDPPD. Disordered regions lie at residues 1–41 and 153–191; these read MSSD…YESQ and QAKARGIPYRKKKRRKTKNEVVVVKKDVANSSTPNQSFT. Residues 37–165 form the ALOG domain; the sequence is RYESQKRRDW…ARGIPYRKKK (129 aa). The segment covering 160 to 169 has biased composition (basic residues); sequence PYRKKKRRKT. Positions 163–167 match the Nuclear localization signal motif; the sequence is KKKRR. Positions 181-191 are enriched in polar residues; sequence ANSSTPNQSFT.

It belongs to the plant homeotic and developmental regulators ALOG protein family.

It is found in the nucleus. In terms of biological role, probable transcription regulator that acts as a developmental regulator by promoting cell growth in response to light. The protein is Protein LIGHT-DEPENDENT SHORT HYPOCOTYLS 9 (LSH9) of Arabidopsis thaliana (Mouse-ear cress).